Reading from the N-terminus, the 89-residue chain is Small ribosomal subunit protein uS14A (89 aa).

It belongs to the universal ribosomal protein uS14 family. Part of the 30S ribosomal subunit. Contacts proteins S3 and S10.

Binds 16S rRNA, required for the assembly of 30S particles and may also be responsible for determining the conformation of the 16S rRNA at the A site. The protein is Small ribosomal subunit protein uS14A of Staphylococcus aureus (strain MRSA252).